Reading from the N-terminus, the 959-residue chain is Protein NLP7 (959 aa).

A disordered region spans residues 1 to 22 (MCEPDDNSARNGVTTQPSRSRE). Residues 9-18 (ARNGVTTQPS) are compositionally biased toward polar residues. The RWP-RK domain occupies 578–659 (KKKTEKKRGK…IESVQGTDGG (82 aa)). Residues 633–654 (SRKIKKVNRSITKLKRVIESVQ) adopt a coiled-coil conformation. Polar residues-rich tracts occupy residues 673–687 (THGQ…SPNG), 694–703 (PNTNNSPNHW), and 735–745 (GTPTSHGSCDG). The disordered stretch occupies residues 673–760 (THGQTSAQPL…PKVPNQDPLF (88 aa)). The PB1 domain maps to 863 to 945 (TVTIKASYKD…KIVRLLVHDV (83 aa)).

Interacts with NRG2. Expressed in roots, stems, leaves, flowers and siliques. Detected in root hairs, emerging secondary roots, vascular tissues, leaf parenchyma cells and stomata.

It localises to the nucleus. Transcription factor involved in regulation of nitrate assimilation and in transduction of the nitrate signal. The chain is Protein NLP7 (NLP7) from Arabidopsis thaliana (Mouse-ear cress).